Consider the following 187-residue polypeptide: 1,6-anhydro-N-acetylmuramyl-L-alanine amidase AmpD (187 aa).

The 139-residue stretch at 29-167 (SLLVVHNISL…APDRKTDPGP (139 aa)) folds into the N-acetylmuramoyl-L-alanine amidase domain. A Zn(2+)-binding site is contributed by histidine 34. Residue glutamate 116 is the Proton acceptor of the active site. Zn(2+) is bound by residues histidine 154 and aspartate 164.

Belongs to the N-acetylmuramoyl-L-alanine amidase 2 family. Zn(2+) is required as a cofactor.

Its subcellular location is the cytoplasm. The catalysed reaction is Hydrolyzes the link between N-acetylmuramoyl residues and L-amino acid residues in certain cell-wall glycopeptides.. In terms of biological role, involved in cell wall peptidoglycan recycling. Specifically cleaves the amide bond between the lactyl group of N-acetylmuramic acid and the alpha-amino group of the L-alanine in degradation products containing an anhydro N-acetylmuramyl moiety. The chain is 1,6-anhydro-N-acetylmuramyl-L-alanine amidase AmpD (ampD) from Salmonella typhimurium (strain SL1344).